The chain runs to 332 residues: Ferredoxin--NADP reductase 2 (332 aa).

Positions 37, 45, 50, 90, 124, 285, and 326 each coordinate FAD.

This sequence belongs to the ferredoxin--NADP reductase type 2 family. As to quaternary structure, homodimer. The cofactor is FAD.

The catalysed reaction is 2 reduced [2Fe-2S]-[ferredoxin] + NADP(+) + H(+) = 2 oxidized [2Fe-2S]-[ferredoxin] + NADPH. The polypeptide is Ferredoxin--NADP reductase 2 (Bacillus licheniformis (strain ATCC 14580 / DSM 13 / JCM 2505 / CCUG 7422 / NBRC 12200 / NCIMB 9375 / NCTC 10341 / NRRL NRS-1264 / Gibson 46)).